The primary structure comprises 126 residues: MGPLGFVAVGIGAAVGAWLRWGLSVMWNALNPALPYGTLAANLLGGYLIGLAVGFFDTHPGLPPEWRLLAITGFLGGLTTFSTFSSEALANLISGDYGWALLHLLSHLGGSLLFAALGLWTYRLLA.

The next 4 membrane-spanning stretches (helical) occupy residues 3 to 23, 36 to 56, 68 to 88, and 99 to 119; these read PLGF…RWGL, YGTL…VGFF, LLAI…SSEA, and WALL…ALGL. Residues Gly-76 and Thr-79 each coordinate Na(+).

It belongs to the fluoride channel Fluc/FEX (TC 1.A.43) family.

It is found in the cell inner membrane. It catalyses the reaction fluoride(in) = fluoride(out). Na(+) is not transported, but it plays an essential structural role and its presence is essential for fluoride channel function. In terms of biological role, fluoride-specific ion channel. Important for reducing fluoride concentration in the cell, thus reducing its toxicity. The chain is Fluoride-specific ion channel FluC from Cupriavidus pinatubonensis (strain JMP 134 / LMG 1197) (Cupriavidus necator (strain JMP 134)).